The chain runs to 53 residues: Conotoxin Ac4.3b (53 aa).

Residues S1 to R11 constitute a propeptide that is removed on maturation. Q12 carries the pyrrolidone carboxylic acid modification. E14 is subject to 4-carboxyglutamate. S18 carries O-linked (HexNAc...) serine glycosylation. 4-hydroxyproline occurs at positions 28, 33, and 48. P48 bears the Proline amide mark. Positions G49 to D53 are excised as a propeptide.

This sequence belongs to the conotoxin A superfamily. Post-translationally, contains 3 disulfide bonds. Expressed by the venom duct.

It is found in the secreted. In terms of biological role, probable neurotoxin with ion channel inhibitor activity. The chain is Conotoxin Ac4.3b from Conus achatinus (Little frog cone).